Here is a 139-residue protein sequence, read N- to C-terminus: uncharacterized protein (139 aa).

The protein resides in the mitochondrion. This is an uncharacterized protein from Marchantia polymorpha (Common liverwort).